Consider the following 413-residue polypeptide: Divalent metal cation transporter MntH (413 aa).

Transmembrane regions (helical) follow at residues 19–39, 46–66, 94–114, 122–142, 156–176, 196–216, 241–261, 290–310, 329–349, 350–370, and 392–412; these read LALM…GNFA, ASFG…AMLI, VWFY…AEFI, LVLG…TFLI, VIGG…IFSQ, AVFL…IYLH, IAMT…AAAF, IFGL…TLAG, AVTM…TRIL, VMSQ…LLIF, and VIVA…LLGV.

Belongs to the NRAMP family.

The protein localises to the cell inner membrane. H(+)-stimulated, divalent metal cation uptake system. This chain is Divalent metal cation transporter MntH, found in Klebsiella pneumoniae (strain 342).